An 89-amino-acid chain; its full sequence is Small ribosomal subunit protein uS15 (89 aa).

This sequence belongs to the universal ribosomal protein uS15 family. As to quaternary structure, part of the 30S ribosomal subunit. Forms a bridge to the 50S subunit in the 70S ribosome, contacting the 23S rRNA.

One of the primary rRNA binding proteins, it binds directly to 16S rRNA where it helps nucleate assembly of the platform of the 30S subunit by binding and bridging several RNA helices of the 16S rRNA. Functionally, forms an intersubunit bridge (bridge B4) with the 23S rRNA of the 50S subunit in the ribosome. The sequence is that of Small ribosomal subunit protein uS15 from Gluconacetobacter diazotrophicus (strain ATCC 49037 / DSM 5601 / CCUG 37298 / CIP 103539 / LMG 7603 / PAl5).